The sequence spans 281 residues: sn-glycerol-3-phosphate transport system permease protein UgpE (281 aa).

6 consecutive transmembrane segments (helical) span residues 16–36, 85–105, 113–133, 142–162, 202–222, and 247–267; these read LILGIAVILFPLYVAFVAATL, FSITLGKITVSMLSAFAIVWF, FFWMIFITLMLPVEVRIFPTV, LDSYAGLTLPLMASAIATFLF, ALFVITFIYGWNQYLWPLLII, and WNSVMAAMLLTLIPPVVIVLV. Residues 77–268 form the ABC transmembrane type-1 domain; sequence LLNSFVMAFS…IPPVVIVLVM (192 aa).

This sequence belongs to the binding-protein-dependent transport system permease family. UgpAE subfamily. As to quaternary structure, the complex is composed of two ATP-binding proteins (UgpC), two transmembrane proteins (UgpA and UgpE) and a solute-binding protein (UgpB).

The protein localises to the cell inner membrane. Its function is as follows. Part of the ABC transporter complex UgpBAEC involved in sn-glycerol-3-phosphate (G3P) import. Probably responsible for the translocation of the substrate across the membrane. This chain is sn-glycerol-3-phosphate transport system permease protein UgpE (ugpE), found in Shigella flexneri serotype 5b (strain 8401).